The following is a 538-amino-acid chain: Cytochrome P450 18a1 (538 aa).

A helical transmembrane segment spans residues 24–44 (QHLLMVFLGLLALVTLLQWLV). C466 is a heme binding site.

This sequence belongs to the cytochrome P450 family. Requires heme as cofactor. In terms of tissue distribution, expressed in body wall (epidermal and muscle cells) and mid- and hind-gut.

It is found in the endoplasmic reticulum membrane. The protein localises to the microsome membrane. In terms of biological role, probably involved in steroid hormones biosynthesis. The polypeptide is Cytochrome P450 18a1 (Cyp18a1) (Drosophila melanogaster (Fruit fly)).